Here is a 310-residue protein sequence, read N- to C-terminus: Protease HtpX homolog (310 aa).

2 consecutive transmembrane segments (helical) span residues 7-27 (SVML…LIGG) and 29-49 (AGMT…YWYS). His131 provides a ligand contact to Zn(2+). Glu132 is a catalytic residue. His135 is a binding site for Zn(2+). 2 helical membrane passes run 141 to 161 (ILIG…ASMA) and 178 to 198 (PLGF…AALI). Glu207 provides a ligand contact to Zn(2+). The disordered stretch occupies residues 277 to 310 (LTGARPQSGGAPSGPERTARNAEDSAKDFWDSLK). Residues 293–310 (RTARNAEDSAKDFWDSLK) show a composition bias toward basic and acidic residues.

The protein belongs to the peptidase M48B family. Zn(2+) serves as cofactor.

Its subcellular location is the cell inner membrane. This is Protease HtpX homolog from Desulfatibacillum aliphaticivorans.